A 324-amino-acid chain; its full sequence is Reaction center protein M chain (324 aa).

Residues 2–51 (ADYQTIYTQIQARGPHITVSGEWGDNDRVGKPFYSYWLGKIGDAQIGPIY) are Cytoplasmic-facing. Residues 52–76 (LGASGIAAFAFGSTAILIILFNMAA) traverse the membrane as a helical segment. Topologically, residues 77-110 (EVHFDPLQFFRQFFWLGLYPPKAQYGMGIPPLHD) are periplasmic. Residues 111–137 (GGWWLMAGLFMTLSLGSWWIRVYSRAR) traverse the membrane as a helical segment. Residues 138-142 (ALGLG) lie on the Cytoplasmic side of the membrane. The helical transmembrane segment at 143–166 (THIAWNFAAAIFFVLCIGCIHPTL) threads the bilayer. Residues 167 to 197 (VGSWSEGVPFGIWPHIDWLTAFSIRYGNFYY) are Periplasmic-facing. 2 residues coordinate (7R,8Z)-bacteriochlorophyll b: His-181 and His-201. A helical membrane pass occupies residues 198–223 (CPWHGFSIGFAYGCGLLFAAHGATIL). Residues His-218 and Glu-233 each coordinate Fe cation. Topologically, residues 224–259 (AVARFGGDREIEQITDRGTAVERAALFWRWTIGFNA) are cytoplasmic. Trp-251 serves as a coordination point for a ubiquinone. A helical membrane pass occupies residues 260 to 284 (TIESVHRWGWFFSLMVMVSASVGIL). His-265 serves as a coordination point for Fe cation. The Periplasmic segment spans residues 285 to 324 (LTGTFVDNWYLWCVKHGAAPDYPAYLPATPDPASLPGAPK).

This sequence belongs to the reaction center PufL/M/PsbA/D family. In terms of assembly, reaction center is composed of four bacteriochlorophylls, two bacteriopheophytins, two ubiquinones, one iron, and three highly hydrophobic polypeptide chains (designated L, M, and H).

It localises to the cellular chromatophore membrane. Functionally, the reaction center is a membrane-bound complex that mediates the initial photochemical event in the electron transfer process of photosynthesis. This Blastochloris viridis (Rhodopseudomonas viridis) protein is Reaction center protein M chain (pufM).